The primary structure comprises 404 residues: MQTLETPQTTSKPEFDTTIHRRKTRPVKVGDITIGGGFPVVVQSMINEDTLDIEGSVSAIRRLHEMGCEIVRVTVPSMAHAKALATIKEKLAQVYQPVPLVADVHHNGLKIALEVAKHVDKVRINPGLYVFEKPSPTRSEYTQAEFEEIGEKIRQTLEPLVISLRDQGKAMRIGVNHGSLAERMLFTYGDTPEGMVESALEFIRICESLDFYNIVISLKASRVPVMLAAYRLMVKRMDELGMDYPLHLGVTEAGDGEYGRIKSTAGIGTLLAEGIGDTIRVSLTEAPEKEIPVCYSILQALGLRKTMVEYVACPSCGRTLFNLEEVLHKVREATKHLTGLDIAVMGCIVNGPGEMADADYGYVGKQAGYISLYRGREEIKKVPEDQGVEELINLIKADGRWIDP.

The [4Fe-4S] cluster site is built by Cys-313, Cys-316, Cys-347, and Glu-354.

It belongs to the IspG family. [4Fe-4S] cluster serves as cofactor.

The enzyme catalyses (2E)-4-hydroxy-3-methylbut-2-enyl diphosphate + 2 oxidized [2Fe-2S]-[ferredoxin] + H2O = 2-C-methyl-D-erythritol 2,4-cyclic diphosphate + 2 reduced [2Fe-2S]-[ferredoxin] + H(+). It participates in isoprenoid biosynthesis; isopentenyl diphosphate biosynthesis via DXP pathway; isopentenyl diphosphate from 1-deoxy-D-xylulose 5-phosphate: step 5/6. Its function is as follows. Converts 2C-methyl-D-erythritol 2,4-cyclodiphosphate (ME-2,4cPP) into 1-hydroxy-2-methyl-2-(E)-butenyl 4-diphosphate. The chain is 4-hydroxy-3-methylbut-2-en-1-yl diphosphate synthase (ferredoxin) from Crocosphaera subtropica (strain ATCC 51142 / BH68) (Cyanothece sp. (strain ATCC 51142)).